Reading from the N-terminus, the 202-residue chain is Protein U22 (202 aa).

2 consecutive transmembrane segments (helical) span residues 5 to 25 (GWSL…LHII) and 172 to 192 (FVYY…SCWF).

It localises to the host membrane. The polypeptide is Protein U22 (U22) (Human herpesvirus 6B (strain Z29) (HHV-6 variant B)).